The following is a 145-amino-acid chain: Synaptojanin-2-binding protein (145 aa).

Over 1–117 (MNGRVDYLVT…GHRGEGDPSG (117 aa)) the chain is Cytoplasmic. One can recognise a PDZ domain in the interval 13 to 100 (EINLTRGPSG…AVSLRVQHRL (88 aa)). The helical transmembrane segment at 118-138 (IPIFMVLVPVFALTMVAAWAF) threads the bilayer. Residues 139 to 145 (MRYRQQL) are Mitochondrial intermembrane-facing.

Binds (via the PDZ domain) to isoform 2A of SYNJ2 (via the unique motif in the C-terminus). Interacts (via C-terminus) with RALBP1. Interacts (via PDZ domain) with ACVR2A (via C-terminus) and ACVR2B (via C-terminus). Forms a ternary complex with ACVR2A and RALBP1. Interacts with MAPK12. Interacts with DLL1; enhances DLL1 protein stability, and promotes notch signaling in endothelial cells.

The protein resides in the mitochondrion outer membrane. In terms of biological role, regulates endocytosis of activin type 2 receptor kinases through the Ral/RALBP1-dependent pathway and may be involved in suppression of activin-induced signal transduction. The polypeptide is Synaptojanin-2-binding protein (SYNJ2BP) (Homo sapiens (Human)).